A 151-amino-acid chain; its full sequence is UPF0756 membrane protein GWCH70_2680 (151 aa).

4 helical membrane-spanning segments follow: residues 5–25, 53–73, 86–106, and 116–136; these read ILFL…SLMI, WGVT…EIGF, WIAL…VTLL, and LVFG…GPLI.

It belongs to the UPF0756 family.

It is found in the cell membrane. The polypeptide is UPF0756 membrane protein GWCH70_2680 (Geobacillus sp. (strain WCH70)).